The chain runs to 315 residues: MSIPEVGKKIRVTVPSTTANLGPGFDCLGAALDLYNEFIFTRIEGGGDRFDLIMESTDGNHLRGGPENLVFRAAQKVWESANMDPFALEARVKLAVPPARGLGSSATAIVAGLIGANAIMNSPLSKEKLLELAIDIEGHPDNVVPSLLGGLCLTARSSSQRWRIIRCEWHYSIKAVVAIPAIRLSTSEARKVMPRNVPISDAVTNMGALTLLLNGLKTGNEELIKEGMFDKLHEPYRWKLIKGGLEVKDAALNAGALGCAISGAGPSILALCKKENGKNVSQAMVKAWEMSGVASRAPFLNVQTTGSQFSTISGK.

An ATP-binding site is contributed by 97 to 107 (PPARGLGSSAT).

The protein belongs to the GHMP kinase family. Homoserine kinase subfamily.

The protein resides in the cytoplasm. It catalyses the reaction L-homoserine + ATP = O-phospho-L-homoserine + ADP + H(+). It participates in amino-acid biosynthesis; L-threonine biosynthesis; L-threonine from L-aspartate: step 4/5. In terms of biological role, catalyzes the ATP-dependent phosphorylation of L-homoserine to L-homoserine phosphate. The chain is Homoserine kinase from Prochlorococcus marinus (strain MIT 9301).